A 526-amino-acid chain; its full sequence is ESX-1 secretion-associated protein EspB (526 aa).

Residues 1 to 23 (MSEELKYELPGLERKAHECESTR) show a composition bias toward basic and acidic residues. Disordered regions lie at residues 1–35 (MSEELKYELPGLERKAHECESTRPEGPGDATKPDE), 91–110 (RQMNGSDAPPPAAEAVVPDM), and 271–526 (QIQE…GKQQ). Gly residues predominate over residues 303–328 (GGPGGPGSGSGGGSGGGASGGSGGGT). Over residues 335-362 (PSTDPSMSPMSTNSAGEEQSSGSPSSGG) the composition is skewed to low complexity. Residues 363-387 (SSSGGSPSGGSPSGGGAPSSGGMPE) show a composition bias toward gly residues. The segment covering 393-405 (DMPGGPDIPGLDD) has biased composition (low complexity). Residues 413-429 (AGGGGGGGVGGGGGGGM) show a composition bias toward gly residues. Residues 430–440 (PAAPLGPAVGA) are compositionally biased toward low complexity. Gly residues predominate over residues 451–484 (RGGGVGVPTGTGGGAGGMMGGGMGGMGAGHGQGQ). The span at 485-508 (GKEKKRDPKLAPDEDLYTEDRAHS) shows a compositional bias: basic and acidic residues.

It belongs to the EspB family.

It localises to the secreted. Its function is as follows. Involved in DNA conjugation, at least in the recipient strain. The sequence is that of ESX-1 secretion-associated protein EspB from Mycolicibacterium smegmatis (strain MKD8) (Mycobacterium smegmatis).